A 236-amino-acid chain; its full sequence is DNA repair protein RecO (236 aa).

This sequence belongs to the RecO family.

In terms of biological role, involved in DNA repair and RecF pathway recombination. This Haemophilus influenzae (strain 86-028NP) protein is DNA repair protein RecO.